The primary structure comprises 83 residues: MSSGGLLLLLGLLTLWAELTPVSSKDRPDFCHLPHETGPCKAKIQAFYYNPIYDTCLKFIYGGCEGNANNFKTMDECKRTCAE.

The N-terminal stretch at 1 to 24 (MSSGGLLLLLGLLTLWAELTPVSS) is a signal peptide. In terms of domain architecture, BPTI/Kunitz inhibitor spans 31–81 (CHLPHETGPCKAKIQAFYYNPIYDTCLKFIYGGCEGNANNFKTMDECKRTC). Cystine bridges form between Cys-31/Cys-81, Cys-40/Cys-64, and Cys-56/Cys-77.

It belongs to the venom Kunitz-type family. As to expression, expressed by the venom gland.

Its subcellular location is the secreted. Its function is as follows. Serine protease inhibitor. This Drysdalia coronoides (White-lipped snake) protein is Kunitz-type serine protease inhibitor 87.